The chain runs to 148 residues: Low molecular weight protein-tyrosine-phosphatase Etp (148 aa).

The active-site Nucleophile is cysteine 13. Arginine 19 is a catalytic residue. The active-site Proton donor is aspartate 119.

It belongs to the low molecular weight phosphotyrosine protein phosphatase family.

The catalysed reaction is O-phospho-L-tyrosyl-[protein] + H2O = L-tyrosyl-[protein] + phosphate. Functionally, dephosphorylates etk. The protein is Low molecular weight protein-tyrosine-phosphatase Etp (etp) of Escherichia coli O157:H7.